A 301-amino-acid polypeptide reads, in one-letter code: MAEEPKPISPLKNLLAGGFGGVCLVFVGHPLDTVKVRLQTQPPSLPGQPPMYSGTIDCFRKTLFREGITGLYRGMAAPIIGVTPMFAVCFFGFGLGKRLQQKSPEDELTYPQLFTAGMLSGVFTTGIMTPGERIKCLLQIQASSGKNKYSGTLDCAKKLYQEFGIRGFYKGTALTLMRDVPASGMYFMTYEWLKNLFTPQGKSVHDLSVPRVLVAGGFRGIFNWVVAIPPDVLKSRFQTAPPGKYPNGFRDVLRELIREEGVTSLYKGFNAVMIRAFPANAACFLGFEIPMKILNWIAPNL.

An N-acetylalanine modification is found at Ala-2. Residues Ala-2–Lys-12 are Cytoplasmic-facing. 3 Solcar repeats span residues Ile-8 to Leu-99, Leu-108 to Leu-196, and Leu-207 to Ile-293. A helical membrane pass occupies residues Asn-13–Leu-31. Topologically, residues Asp-32–Arg-73 are mitochondrial matrix. Residues Gly-74–Phe-93 traverse the membrane as a helical segment. Residues Gly-94–Gln-112 lie on the Cytoplasmic side of the membrane. Residues Leu-113 to Gly-131 traverse the membrane as a helical segment. The Mitochondrial matrix segment spans residues Glu-132 to Lys-170. N6-acetyllysine is present on residues Lys-148 and Lys-157. Lys-170 is modified (N6-acetyllysine; alternate). Lys-170 bears the N6-succinyllysine; alternate mark. The chain crosses the membrane as a helical span at residues Gly-171 to Tyr-190. At Glu-191–Arg-211 the chain is on the cytoplasmic side. A helical membrane pass occupies residues Val-212 to Pro-230. The Mitochondrial matrix segment spans residues Asp-231–Lys-267. Residues Gly-268–Phe-287 form a helical membrane-spanning segment. The Cytoplasmic portion of the chain corresponds to Glu-288–Leu-301.

This sequence belongs to the mitochondrial carrier (TC 2.A.29) family. The N-terminus is blocked.

It is found in the mitochondrion inner membrane. The catalysed reaction is O-acetyl-(R)-carnitine(in) + (R)-carnitine(out) = O-acetyl-(R)-carnitine(out) + (R)-carnitine(in). It carries out the reaction an O-acyl-(R)-carnitine(in) + (R)-carnitine(out) = an O-acyl-(R)-carnitine(out) + (R)-carnitine(in). The enzyme catalyses O-propanoyl-(R)-carnitine(in) + (R)-carnitine(out) = O-propanoyl-(R)-carnitine(out) + (R)-carnitine(in). It catalyses the reaction O-hexadecanoyl-(R)-carnitine(in) + (R)-carnitine(out) = O-hexadecanoyl-(R)-carnitine(out) + (R)-carnitine(in). The catalysed reaction is O-octanoyl-(R)-carnitine(in) + (R)-carnitine(out) = O-octanoyl-(R)-carnitine(out) + (R)-carnitine(in). It carries out the reaction (R)-carnitine(in) = (R)-carnitine(out). In terms of biological role, mediates the electroneutral exchange of acylcarnitines (O-acyl-(R)-carnitine or L-acylcarnitine) of different acyl chain lengths (ranging from O-acetyl-(R)-carnitine to long-chain O-acyl-(R)-carnitines) with free carnitine ((R)-carnitine or L-carnitine) across the mitochondrial inner membrane, via a ping-pong mechanism. Key player in the mitochondrial oxidation pathway, it translocates the fatty acids in the form of acylcarnitines into the mitochondrial matrix, where the carnitine palmitoyltransferase 2 (CPT-2) activates them to undergo fatty acid beta-oxidation. Catalyzes the unidirectional transport (uniport) of carnitine at lower rates than the antiport (exchange). The sequence is that of Mitochondrial carnitine/acylcarnitine carrier protein from Rattus norvegicus (Rat).